We begin with the raw amino-acid sequence, 194 residues long: UPF0215 protein DR_A0167 (194 aa).

Belongs to the UPF0215 family.

This chain is UPF0215 protein DR_A0167, found in Deinococcus radiodurans (strain ATCC 13939 / DSM 20539 / JCM 16871 / CCUG 27074 / LMG 4051 / NBRC 15346 / NCIMB 9279 / VKM B-1422 / R1).